The following is a 778-amino-acid chain: Gelsolin (778 aa).

The signal sequence occupies residues 1-23 (MGKQGFGYIFLTIFCTMALKLNC). The actin-severing stretch occupies residues 49 to 172 (MVEHAEFSKA…YKAGGVASGF (124 aa)). The stretch at 72 to 154 (FDLVPVPKNL…VQGHESSTFL (83 aa)) is one Gelsolin-like 1 repeat. Ca(2+)-binding residues include glycine 88, aspartate 89, glutamate 120, aspartate 132, glycine 137, and alanine 139. Residues 119–122 (DERG) form an actin-actin interfilament contact point region. A 1,2-diacyl-sn-glycero-3-phospho-(1D-myo-inositol-4,5-bisphosphate) is bound at residue 158-165 (KSGIKYKA). Valine 168 provides a ligand contact to Ca(2+). Position 184–192 (184–192 (RLLQVKGRR)) interacts with a 1,2-diacyl-sn-glycero-3-phospho-(1D-myo-inositol-4,5-bisphosphate). A Gelsolin-like 2 repeat occupies 193–266 (TVRATEVPVS…SEEGAEREEM (74 aa)). Residues glycine 209 and aspartate 210 each coordinate Ca(2+). Cysteine 211 and cysteine 224 are disulfide-bonded. 18 residues coordinate Ca(2+): glutamate 232, aspartate 282, glutamate 325, aspartate 326, glutamate 350, glycine 467, aspartate 468, glutamate 498, aspartate 510, glycine 515, proline 517, threonine 547, asparagine 587, aspartate 588, glutamate 610, aspartate 692, aspartate 693, and glutamate 715. 2 Gelsolin-like repeats span residues 313–385 (DENP…TPLF) and 451–532 (SEKV…PHLM). The tract at residues 430–778 (AAQHGMEDDG…LQRAMADVDV (349 aa)) is actin-binding, Ca-sensitive. Gelsolin-like repeat units follow at residues 574–638 (AVEL…DNFW) and 677–752 (IEEV…PPTF).

Belongs to the villin/gelsolin family. Binds to actin and to fibronectin. In terms of tissue distribution, highly expressed in homogene cells of the basilar papilla. Also detected in subcutaneous layer of the skin.

Its subcellular location is the secreted. It is found in the cytoplasm. The protein resides in the cytoskeleton. Functionally, calcium-regulated, actin-modulating protein that binds to the plus (or barbed) ends of actin monomers or filaments, preventing monomer exchange (end-blocking or capping). It can promote the assembly of monomers into filaments (nucleation) as well as sever filaments already formed. Plays a role in ciliogenesis. This chain is Gelsolin (GSN), found in Gallus gallus (Chicken).